We begin with the raw amino-acid sequence, 120 residues long: Flagellar protein FliT (120 aa).

Residues 1–50 form a required for homodimerization region; that stretch reads MERHQHLLSEYQQILTLSEQMLMLATVENWNALVDLEMTYLKAVENTANI. The segment at 60-98 is fliD binding; that stretch reads LQELLRQKLRSILENEIEIKRLLQRRLDKLSELVGQSTR.

It belongs to the FliT family. Homodimer. Interacts with FliD and FlhC.

The protein resides in the cytoplasm. Its subcellular location is the cytosol. In terms of biological role, dual-function protein that regulates the transcription of class 2 flagellar operons and that also acts as an export chaperone for the filament-capping protein FliD. As a transcriptional regulator, acts as an anti-FlhDC factor; it directly binds FlhC, thus inhibiting the binding of the FlhC/FlhD complex to class 2 promoters, resulting in decreased expression of class 2 flagellar operons. As a chaperone, effects FliD transition to the membrane by preventing its premature polymerization, and by directing it to the export apparatus. In Yersinia pestis bv. Antiqua (strain Antiqua), this protein is Flagellar protein FliT.